A 123-amino-acid polypeptide reads, in one-letter code: Immunoglobulin lambda variable 5-39 (123 aa).

Residues 1–19 (MAWTPLLLLLLSHCTGSLS) form the signal peptide. The tract at residues 20 to 44 (QPVLTQPTSLSASPGASARFTCTLR) is framework-1. Residues 21-123 (PVLTQPTSLS…YCAIWYSSTS (103 aa)) form the Ig-like domain. Cysteines 41 and 115 form a disulfide. Residues 45-53 (SGINVGTYR) form a complementarity-determining-1 region. The segment at 54-70 (IYWYQQKPGSLPRYLLR) is framework-2. The complementarity-determining-2 stretch occupies residues 71–77 (YKSDSDK). The segment at 78 to 115 (QQGSGVPSRFSGSKDASTNAGLLLISGLQSEDEADYYC) is framework-3. The interval 116–123 (AIWYSSTS) is complementarity-determining-3.

As to quaternary structure, immunoglobulins are composed of two identical heavy chains and two identical light chains; disulfide-linked.

Its subcellular location is the secreted. It localises to the cell membrane. Functionally, v region of the variable domain of immunoglobulin light chains that participates in the antigen recognition. Immunoglobulins, also known as antibodies, are membrane-bound or secreted glycoproteins produced by B lymphocytes. In the recognition phase of humoral immunity, the membrane-bound immunoglobulins serve as receptors which, upon binding of a specific antigen, trigger the clonal expansion and differentiation of B lymphocytes into immunoglobulins-secreting plasma cells. Secreted immunoglobulins mediate the effector phase of humoral immunity, which results in the elimination of bound antigens. The antigen binding site is formed by the variable domain of one heavy chain, together with that of its associated light chain. Thus, each immunoglobulin has two antigen binding sites with remarkable affinity for a particular antigen. The variable domains are assembled by a process called V-(D)-J rearrangement and can then be subjected to somatic hypermutations which, after exposure to antigen and selection, allow affinity maturation for a particular antigen. In Homo sapiens (Human), this protein is Immunoglobulin lambda variable 5-39.